We begin with the raw amino-acid sequence, 154 residues long: uncharacterized protein (154 aa).

Residues H47, H127, and H131 each coordinate a divalent metal cation. Phosphotyrosine is present on Y150.

The protein belongs to the DinB family. In terms of assembly, homodimer.

This is an uncharacterized protein from Bacillus subtilis (strain 168).